We begin with the raw amino-acid sequence, 122 residues long: Large ribosomal subunit protein uL14 (122 aa).

It belongs to the universal ribosomal protein uL14 family. As to quaternary structure, part of the 50S ribosomal subunit. Forms a cluster with proteins L3 and L19. In the 70S ribosome, L14 and L19 interact and together make contacts with the 16S rRNA in bridges B5 and B8.

Binds to 23S rRNA. Forms part of two intersubunit bridges in the 70S ribosome. The protein is Large ribosomal subunit protein uL14 of Solidesulfovibrio magneticus (strain ATCC 700980 / DSM 13731 / RS-1) (Desulfovibrio magneticus).